The sequence spans 987 residues: Ephrin type-B receptor 4a (987 aa).

The signal sequence occupies residues 1–24 (MELFSRNVAAFWIILLEFLLGSVA). Over 25–548 (EEEVLMNTKT…DSSSPLLVTG (524 aa)) the chain is Extracellular. One can recognise an Eph LBD domain in the interval 26-205 (EEVLMNTKTE…FFKKCPALTR (180 aa)). 2 cysteine pairs are disulfide-bonded: Cys70–Cys187 and Cys104–Cys114. Residues 319-340 (DSADTPCTRPPSSPRSPVPQVN) are disordered. The span at 326-335 (TRPPSSPRSP) shows a compositional bias: pro residues. Fibronectin type-III domains lie at 328 to 438 (PPSS…TSPN) and 442 to 536 (LVSG…TLPD). A helical transmembrane segment spans residues 549–569 (ILIAMGMLLLIIVIGAAIYCI). Residues 570 to 987 (RKQNNYKDPE…QNKAPGNVLY (418 aa)) are Cytoplasmic-facing. The Protein kinase domain occupies 621–884 (VKIEEVIGAG…NIVSALDKLI (264 aa)). ATP is bound by residues 627–635 (IGAGEFGEV) and Lys653. The active-site Proton acceptor is the Asp746. Residues 914-978 (SSCGTVGDWL…LSSIEALGIQ (65 aa)) enclose the SAM domain.

The protein belongs to the protein kinase superfamily. Tyr protein kinase family. Ephrin receptor subfamily.

It is found in the cell membrane. It catalyses the reaction L-tyrosyl-[protein] + ATP = O-phospho-L-tyrosyl-[protein] + ADP + H(+). Its function is as follows. Receptor tyrosine kinase which binds promiscuously transmembrane ephrin-B family ligands residing on adjacent cells, leading to contact-dependent bidirectional signaling into neighboring cells. The signaling pathway downstream of the receptor is referred to as forward signaling while the signaling pathway downstream of the ephrin ligand is referred to as reverse signaling. Together with its cognate ligand/functional ligand EFNB2 is involved in the regulation of cell adhesion and cell migration, and plays a central role in heart morphogenesis, angiogenesis and blood vessel remodeling and permeability. EPHB4-mediated forward signaling controls cellular repulsion and segregation from EFNB2-expressing cells. Involved in somitogenesis. The protein is Ephrin type-B receptor 4a of Danio rerio (Zebrafish).